We begin with the raw amino-acid sequence, 180 residues long: Probable chorismate pyruvate-lyase (180 aa).

Positions 73, 111, and 170 each coordinate substrate.

This sequence belongs to the UbiC family.

The protein localises to the cytoplasm. The enzyme catalyses chorismate = 4-hydroxybenzoate + pyruvate. It participates in cofactor biosynthesis; ubiquinone biosynthesis. Functionally, removes the pyruvyl group from chorismate, with concomitant aromatization of the ring, to provide 4-hydroxybenzoate (4HB) for the ubiquinone pathway. In Nitrosospira multiformis (strain ATCC 25196 / NCIMB 11849 / C 71), this protein is Probable chorismate pyruvate-lyase.